Consider the following 528-residue polypeptide: MAPVAFPTSFFLCLLLASGLAQAGRLLVVPMDGSHWFTMQMVVEKLIHRGHEVVVVIPEVSWQLGKSLNCTVKTYSISHTLEDLDREFKYLSYTQWKTPEHSIRSFLTGSARGFFELTFSHCRSLFNDKKLVEYLKQRFFDAVFLDPFDVCGLIVAKYFSLPSVIFARGVFCDYLEEGAQCPSLPSYVPRLFSKYTDTMTFKERVWNHLIYIEEHAFCSYFLRTAVEVASEILQTPVTMTDLFSPVSIWLLRTDFVLEFPRPVMPNMVFIGGINCLQKKSLSKEFEAYVNASGEHGIVVFSLGSMVSEIPEKKAMEIAEALGRIPQTVLWRYTGTRPSNLAKNTILVKWLPQNDLLGHPKTRAFITHSGSHGIYEGICNGVPMVMMPLFGDQMDNAKRMETRGAGVTLNVLEMTADDLENALKTVINNKSYKENIMRLSSLHKDRPIEPLDLAVFWVEYVMRHKGAPHLRPAAHDLTWYQYHSLDVIGFLLAIVLTVVFIVFKCCAYGCRKCFGGKGRVKKSHKSKTH.

An N-terminal signal peptide occupies residues 1–23 (MAPVAFPTSFFLCLLLASGLAQA). Asparagine 69 is a glycosylation site (N-linked (GlcNAc...) asparagine). The residue at position 97 (lysine 97) is an N6-succinyllysine. Asparagine 290 and asparagine 428 each carry an N-linked (GlcNAc...) asparagine glycan. Residues 486 to 506 (VIGFLLAIVLTVVFIVFKCCA) form a helical membrane-spanning segment.

Belongs to the UDP-glycosyltransferase family. As to quaternary structure, homodimer. Homooligomer. Interacts with UGT1A1, UGT1A3, UGT1A4, UGT1A6, UGT1A7, UGT1A8 and UGT1A10 to form heterodimers. As to expression, highly expressed in liver and at lower levels in stomach and kidney.

It is found in the endoplasmic reticulum membrane. The enzyme catalyses glucuronate acceptor + UDP-alpha-D-glucuronate = acceptor beta-D-glucuronoside + UDP + H(+). It carries out the reaction 2-hydroxy-17beta-estradiol + UDP-alpha-D-glucuronate = 2-hydroxy-17beta-estradiol 3-O-(beta-D-glucuronate) + UDP + H(+). It catalyses the reaction 4-hydroxy-17beta-estradiol + UDP-alpha-D-glucuronate = 17beta-estradiol 4-O-(beta-D-glucuronate) + UDP + H(+). The catalysed reaction is 2-hydroxyestrone + UDP-alpha-D-glucuronate = 2-hydroxyestrone 3-O-(beta-D-glucuronate) + UDP + H(+). The enzyme catalyses 4-hydroxyestrone + UDP-alpha-D-glucuronate = estrone 4-O-(beta-D-glucuronate) + UDP + H(+). It carries out the reaction prunetin + UDP-alpha-D-glucuronate = prunetin-5-O-beta-D-glucuronide + UDP. It catalyses the reaction 8-iso-prostaglandin F2alpha + UDP-alpha-D-glucuronate = 8-iso-prostaglandin F2alpha-glucuronide + UDP + H(+). The catalysed reaction is 5-epi-5-F2t-IsoP + UDP-alpha-D-glucuronate = 5-epi-5-F2t-IsoP-glucuronide + UDP + H(+). The enzyme catalyses (5Z,8Z,11Z,14Z)-eicosatetraenoate + UDP-alpha-D-glucuronate = O-[(5Z),(8Z),(11Z),(14Z)-eicosatetraenoyl]-beta-D-glucuronate + UDP. It carries out the reaction 15-hydroxy-(5Z,8Z,11Z,13E)-eicosatetraenoate + UDP-alpha-D-glucuronate = 15-O-(beta-D-glucuronosyl)-(5Z,8Z,11Z,14Z)-eicosatetraenoate + UDP + H(+). It catalyses the reaction prostaglandin B1 + UDP-alpha-D-glucuronate = 15-O-(beta-D-glucuronosyl)-prostaglandin B1 + UDP + H(+). The catalysed reaction is (E)-ferulate + UDP-alpha-D-glucuronate = (E)-4-O-(beta-D-glucuronosyl)-ferulate + UDP + H(+). The enzyme catalyses (E)-ferulate + UDP-alpha-D-glucuronate = (E)-ferulic acid beta-D-glucuronate ester + UDP. It carries out the reaction candesartan + UDP-alpha-D-glucuronate = candesartan O-beta-D-glucuronoside + UDP. It catalyses the reaction SN-38 + UDP-alpha-D-glucuronate = SN-38 O-beta-D-glucuronide + UDP + H(+). The catalysed reaction is mycophenolate + UDP-alpha-D-glucuronate = mycophenolate 7-O-beta-D-glucuronide + UDP + H(+). Functionally, UDP-glucuronosyltransferase (UGT) that catalyzes phase II biotransformation reactions in which lipophilic substrates are conjugated with glucuronic acid to increase the metabolite's water solubility, thereby facilitating excretion into either the urine or bile. Essential for the elimination and detoxification of drugs, xenobiotics and endogenous compounds. Catalyzes the glucuronidation of endogenous estrogen hormones such as estradiol and estrone. Involved in the glucuronidation of arachidonic acid (AA) and AA-derived eicosanoids including 15-HETE, PGB1 and F2-isoprostanes (8-iso-PGF2alpha and 5-epi-5-F2t-IsoP). Glucuronates the phytochemical ferulic acid efficently at both the phenolic or the carboxylic acid group. Also catalyzes the glucuronidation of the isoflavones genistein, daidzein, glycitein, formononetin, biochanin A and prunetin, which are phytoestrogens with anticancer and cardiovascular properties. Involved in the glucuronidation of the AGTR1 angiotensin receptor antagonist caderastan, a drug which can inhibit the effect of angiotensin II. Involved in the biotransformation of 7-ethyl-10-hydroxycamptothecin (SN-38), the pharmacologically active metabolite of the anticancer drug irinotecan. Also metabolizes mycophenolate, an immunosuppressive agent. This is UDP-glucuronosyltransferase 1A9 from Mus musculus (Mouse).